A 476-amino-acid chain; its full sequence is Ureidoglycolate hydrolase (476 aa).

Residues 1-25 form the signal peptide; it reads MESLKRFLCSIALLLISLLLPSSLA. Mn(2+) contacts are provided by His138, Asp149, Glu184, and His254. Residues 183 to 184, 254 to 257, His290, Asn340, Arg353, 423 to 424, and His448 each bind substrate; these read EE, HIEQ, and YH. The interval 276-391 is involved in dimerization; sequence APASLKVEFE…LSEFKIVNQD (116 aa). A Mn(2+)-binding site is contributed by His448.

The protein belongs to the peptidase M20 family. Homodimer. Requires Mn(2+) as cofactor. It depends on Ni(2+) as a cofactor. The cofactor is Co(2+).

The protein localises to the endoplasmic reticulum. The catalysed reaction is (S)-ureidoglycolate + H2O + 2 H(+) = glyoxylate + 2 NH4(+) + CO2. The protein operates within nitrogen metabolism; (S)-allantoin degradation; glyoxylate from (S)-ureidoglycolate: step 1/1. Involved in the catabolism of purine nucleotides. Can use (S)-ureidoglycolate as substrate, but not (R)-ureidoglycolate or allantoate. The sequential activity of AAH, UGLYAH and UAH allows a complete purine breakdown without the intermediate generation of urea. This is Ureidoglycolate hydrolase from Arabidopsis thaliana (Mouse-ear cress).